A 347-amino-acid polypeptide reads, in one-letter code: DnaJ protein ERDJ3B (347 aa).

The signal sequence occupies residues 1–23 (MAAPRWIGPLLLLLLHFVAAVAG). The J domain maps to 25 to 90 (SYYDVLQVPK…EKRKIYDRYG (66 aa)).

In terms of assembly, interacts with BIP1.

It localises to the endoplasmic reticulum. In terms of biological role, may play a role in protein folding in the endoplasmic reticulum. In Oryza sativa subsp. japonica (Rice), this protein is DnaJ protein ERDJ3B.